The chain runs to 331 residues: Anthranilate phosphoribosyltransferase (331 aa).

5-phospho-alpha-D-ribose 1-diphosphate-binding positions include glycine 78, 81–82 (GD), threonine 86, 88–91 (NVST), 106–114 (KHGNYSVSS), and serine 118. Glycine 78 serves as a coordination point for anthranilate. Serine 90 lines the Mg(2+) pocket. An anthranilate-binding site is contributed by asparagine 109. An anthranilate-binding site is contributed by arginine 164. Residues aspartate 222 and glutamate 223 each contribute to the Mg(2+) site.

The protein belongs to the anthranilate phosphoribosyltransferase family. In terms of assembly, homodimer. The cofactor is Mg(2+).

The catalysed reaction is N-(5-phospho-beta-D-ribosyl)anthranilate + diphosphate = 5-phospho-alpha-D-ribose 1-diphosphate + anthranilate. It functions in the pathway amino-acid biosynthesis; L-tryptophan biosynthesis; L-tryptophan from chorismate: step 2/5. In terms of biological role, catalyzes the transfer of the phosphoribosyl group of 5-phosphorylribose-1-pyrophosphate (PRPP) to anthranilate to yield N-(5'-phosphoribosyl)-anthranilate (PRA). The chain is Anthranilate phosphoribosyltransferase from Haloarcula marismortui (strain ATCC 43049 / DSM 3752 / JCM 8966 / VKM B-1809) (Halobacterium marismortui).